The following is a 713-amino-acid chain: Serine/threonine-protein kinase SSN3 (713 aa).

A Protein kinase domain is found at 66–484; the sequence is YTILGFLSSG…ANQALEHAWF (419 aa). 72-80 provides a ligand contact to ATP; sequence LSSGTYGRV. A compositionally biased stretch (low complexity) spans 104 to 120; sequence NAGTGSGTATVGSGAST. Residues 104–188 are disordered; that stretch reads NAGTGSGTAT…GGSDNTLQLS (85 aa). Residues 129-142 show a composition bias toward polar residues; that stretch reads QQHQLLDSPSSSLH. Positions 158 to 175 are enriched in low complexity; sequence GTPSASPSLSASLGTSTA. Residue Lys-201 participates in ATP binding. Asp-304 functions as the Proton acceptor in the catalytic mechanism. Over residues 657–672 the composition is skewed to polar residues; it reads SNPATVRSSHSIGSTE. Residues 657 to 713 are disordered; it reads SNPATVRSSHSIGSTESITPTTSSQPIPAQPSSAPLARTTNLVATATRNQQRKRQRN. A compositionally biased stretch (low complexity) spans 673–691; sequence SITPTTSSQPIPAQPSSAP. Residues 694 to 705 show a composition bias toward polar residues; it reads RTTNLVATATRN.

This sequence belongs to the protein kinase superfamily. CMGC Ser/Thr protein kinase family. CDC2/CDKX subfamily. Component of the srb8-11 complex, a regulatory module of the Mediator complex. The cofactor is Mg(2+).

It is found in the nucleus. It carries out the reaction L-seryl-[protein] + ATP = O-phospho-L-seryl-[protein] + ADP + H(+). The catalysed reaction is L-threonyl-[protein] + ATP = O-phospho-L-threonyl-[protein] + ADP + H(+). It catalyses the reaction [DNA-directed RNA polymerase] + ATP = phospho-[DNA-directed RNA polymerase] + ADP + H(+). In terms of biological role, component of the srb8-11 complex. The srb8-11 complex is a regulatory module of the Mediator complex which is itself dependent transcription. The srb8-11 complex may be involved in the transcriptional repression of a subset of genes regulated by Mediator. It may inhibit the association of the Mediator complex with RNA polymerase II to form the holoenzyme complex. The srb8-11 complex phosphorylates the C-terminal domain (CTD) of the largest subunit of RNA polymerase II. This chain is Serine/threonine-protein kinase SSN3 (SSN3), found in Mycosarcoma maydis (Corn smut fungus).